Reading from the N-terminus, the 317-residue chain is Transaldolase (317 aa).

Lys132 serves as the catalytic Schiff-base intermediate with substrate.

This sequence belongs to the transaldolase family. Type 1 subfamily. In terms of assembly, homodimer.

Its subcellular location is the cytoplasm. It catalyses the reaction D-sedoheptulose 7-phosphate + D-glyceraldehyde 3-phosphate = D-erythrose 4-phosphate + beta-D-fructose 6-phosphate. Its pathway is carbohydrate degradation; pentose phosphate pathway; D-glyceraldehyde 3-phosphate and beta-D-fructose 6-phosphate from D-ribose 5-phosphate and D-xylulose 5-phosphate (non-oxidative stage): step 2/3. Functionally, transaldolase is important for the balance of metabolites in the pentose-phosphate pathway. The sequence is that of Transaldolase from Histophilus somni (strain 129Pt) (Haemophilus somnus).